The sequence spans 176 residues: Isopentenyl-diphosphate Delta-isomerase (176 aa).

Mn(2+) contacts are provided by His-22 and His-28. One can recognise a Nudix hydrolase domain in the interval 26 to 160 (LRHKAISVFI…PETFTPWLHI (135 aa)). Cys-62 is a catalytic residue. His-64 contributes to the Mn(2+) binding site. Position 82 (Glu-82) interacts with Mg(2+). Mn(2+) is bound by residues Glu-108 and Glu-110. Glu-110 is a catalytic residue.

It belongs to the IPP isomerase type 1 family. Requires Mg(2+) as cofactor. The cofactor is Mn(2+).

Its subcellular location is the cytoplasm. The enzyme catalyses isopentenyl diphosphate = dimethylallyl diphosphate. It functions in the pathway isoprenoid biosynthesis; dimethylallyl diphosphate biosynthesis; dimethylallyl diphosphate from isopentenyl diphosphate: step 1/1. Its pathway is porphyrin-containing compound metabolism; chlorophyll biosynthesis. Functionally, catalyzes the 1,3-allylic rearrangement of the homoallylic substrate isopentenyl (IPP) to its highly electrophilic allylic isomer, dimethylallyl diphosphate (DMAPP). This Jannaschia sp. (strain CCS1) protein is Isopentenyl-diphosphate Delta-isomerase.